A 321-amino-acid chain; its full sequence is Sideroflexin-3 (321 aa).

Met1 carries the post-translational modification N-acetylmethionine. 4 helical membrane passes run 146–164, 174–194, 226–246, and 266–286; these read LGTA…ALGL, LVGR…NIPL, FQVV…PPLI, and LQVG…CALF.

Belongs to the sideroflexin family.

The protein localises to the mitochondrion membrane. The enzyme catalyses L-serine(in) = L-serine(out). In terms of biological role, mitochondrial serine transporter that mediates transport of serine into mitochondria, an important step of the one-carbon metabolism pathway. Mitochondrial serine is converted to glycine and formate, which then exits to the cytosol where it is used to generate the charged folates that serve as one-carbon donors. This is Sideroflexin-3 from Homo sapiens (Human).